Reading from the N-terminus, the 147-residue chain is Ubiquitin-conjugating enzyme E2-16 kDa (147 aa).

The 147-residue stretch at 1 to 147 (MALKRINKEL…AREWTRKYAI (147 aa)) folds into the UBC core domain. The active-site Glycyl thioester intermediate is the Cys107.

It belongs to the ubiquitin-conjugating enzyme family.

It catalyses the reaction S-ubiquitinyl-[E1 ubiquitin-activating enzyme]-L-cysteine + [E2 ubiquitin-conjugating enzyme]-L-cysteine = [E1 ubiquitin-activating enzyme]-L-cysteine + S-ubiquitinyl-[E2 ubiquitin-conjugating enzyme]-L-cysteine.. It participates in protein modification; protein ubiquitination. In terms of biological role, catalyzes the covalent attachment of ubiquitin to other proteins. This Pyricularia oryzae (strain 70-15 / ATCC MYA-4617 / FGSC 8958) (Rice blast fungus) protein is Ubiquitin-conjugating enzyme E2-16 kDa (UBC1).